A 1029-amino-acid polypeptide reads, in one-letter code: Carbamoyl phosphate synthase large chain (1029 aa).

The carboxyphosphate synthetic domain stretch occupies residues 1–402 (MPKRTDLQTI…SLQKALRSTE (402 aa)). R129, R169, G175, G176, E208, I210, E215, G241, V242, H243, Q285, and E299 together coordinate ATP. The 196-residue stretch at 133 to 328 (QAAMKKIGVE…IAKIAALLAV (196 aa)) folds into the ATP-grasp 1 domain. Q285, E299, and N301 together coordinate Mg(2+). Mn(2+)-binding residues include Q285, E299, and N301. Residues 403-544 (SDIRGVYAEM…YHYSTYEWED (142 aa)) are oligomerization domain. The carbamoyl phosphate synthetic domain stretch occupies residues 545 to 929 (EVTGTDKPKV…AFYRAQLGAK (385 aa)). The 193-residue stretch at 671–863 (NALCERLGLS…LAKSAARIAV (193 aa)) folds into the ATP-grasp 2 domain. ATP contacts are provided by R707, Q747, L749, E754, G779, V780, H781, S782, Q822, and E834. Mg(2+) contacts are provided by Q822, E834, and N836. Positions 822, 834, and 836 each coordinate Mn(2+). In terms of domain architecture, MGS-like spans 930 to 1028 (SYLPLSGTAL…QDWQTQEAVA (99 aa)). Residues 930–1029 (SYLPLSGTAL…DWQTQEAVAG (100 aa)) form an allosteric domain region.

Belongs to the CarB family. Composed of two chains; the small (or glutamine) chain promotes the hydrolysis of glutamine to ammonia, which is used by the large (or ammonia) chain to synthesize carbamoyl phosphate. Tetramer of heterodimers (alpha,beta)4. Mg(2+) serves as cofactor. Requires Mn(2+) as cofactor.

The catalysed reaction is hydrogencarbonate + L-glutamine + 2 ATP + H2O = carbamoyl phosphate + L-glutamate + 2 ADP + phosphate + 2 H(+). It carries out the reaction hydrogencarbonate + NH4(+) + 2 ATP = carbamoyl phosphate + 2 ADP + phosphate + 2 H(+). It functions in the pathway amino-acid biosynthesis; L-arginine biosynthesis; carbamoyl phosphate from bicarbonate: step 1/1. It participates in pyrimidine metabolism; UMP biosynthesis via de novo pathway; (S)-dihydroorotate from bicarbonate: step 1/3. Functionally, large subunit of the glutamine-dependent carbamoyl phosphate synthetase (CPSase). CPSase catalyzes the formation of carbamoyl phosphate from the ammonia moiety of glutamine, carbonate, and phosphate donated by ATP, constituting the first step of 2 biosynthetic pathways, one leading to arginine and/or urea and the other to pyrimidine nucleotides. The large subunit (synthetase) binds the substrates ammonia (free or transferred from glutamine from the small subunit), hydrogencarbonate and ATP and carries out an ATP-coupled ligase reaction, activating hydrogencarbonate by forming carboxy phosphate which reacts with ammonia to form carbamoyl phosphate. This chain is Carbamoyl phosphate synthase large chain, found in Deinococcus deserti (strain DSM 17065 / CIP 109153 / LMG 22923 / VCD115).